Here is a 138-residue protein sequence, read N- to C-terminus: Acidic phospholipase A2 daboiatoxin A chain (138 aa).

The first 16 residues, 1 to 16, serve as a signal peptide directing secretion; that stretch reads MRTLWIMAVCLIGVEG. Cystine bridges form between Cys-42–Cys-131, Cys-44–Cys-60, Cys-59–Cys-111, Cys-65–Cys-138, Cys-66–Cys-104, Cys-73–Cys-97, and Cys-91–Cys-102. The Ca(2+) site is built by Tyr-43, Gly-45, and Gly-47. Residue His-63 is part of the active site. A Ca(2+)-binding site is contributed by Asp-64. Asp-105 is an active-site residue.

The protein belongs to the phospholipase A2 family. Group II subfamily. D49 sub-subfamily. As to quaternary structure, heterodimer of A and B chain; non-covalently linked. The acidic protein (B chain) has phospholipase A2 activity and the A chain weakly inhibits the B chain enzymatic activity but potentiates its lethal potency. Requires Ca(2+) as cofactor. In terms of tissue distribution, expressed by the venom gland.

It is found in the secreted. The catalysed reaction is a 1,2-diacyl-sn-glycero-3-phosphocholine + H2O = a 1-acyl-sn-glycero-3-phosphocholine + a fatty acid + H(+). Heterodimer (A and B chains): phospholipase A2 that acts as a presynaptic neurotoxin and shows a PLA2 activity of 1377 umol/min/mg. In vivo, induces edema and produces neurotoxic symptoms in mice. Also exhibits indirect hemolysis, a strong myonecrotic activity and cytotoxicity. PLA2 catalyzes the calcium-dependent hydrolysis of the 2-acyl groups in 3-sn-phosphoglycerides. Its function is as follows. Monomer: Snake venom phospholipase A2 (PLA2) that shows a PLA2 activity of 578 umol/min/mg. This is Acidic phospholipase A2 daboiatoxin A chain from Daboia siamensis (Eastern Russel's viper).